We begin with the raw amino-acid sequence, 346 residues long: Cobalt transport protein CbiM (346 aa).

The first 25 residues, 1 to 25 (MKRITLYAAGSAIIGAMLLAGPAHA), serve as a signal peptide directing secretion. A run of 8 helical transmembrane segments spans residues 31 to 51 (GILP…FLAL), 68 to 88 (PLVG…IPVP), 101 to 121 (IAAI…ALLI), 133 to 153 (TLGA…WFVF), 159 to 179 (LGAG…WATY), 196 to 216 (FYPL…PLGV), 255 to 275 (ATVV…AGPS), and 312 to 332 (LLLF…GYFW).

This sequence belongs to the CbiM family. In terms of assembly, forms an energy-coupling factor (ECF) transporter complex composed of an ATP-binding protein (A component, CbiO), a transmembrane protein (T component, CbiQ) and 2 possible substrate-capture proteins (S components, CbiM and CbiN) of unknown stoichimetry.

The protein resides in the cell inner membrane. It functions in the pathway cofactor biosynthesis; adenosylcobalamin biosynthesis. In terms of biological role, part of the energy-coupling factor (ECF) transporter complex CbiMNOQ involved in cobalt import. The sequence is that of Cobalt transport protein CbiM from Geobacter sulfurreducens (strain ATCC 51573 / DSM 12127 / PCA).